The following is a 249-amino-acid chain: DNA polymerase sliding clamp (249 aa).

It belongs to the PCNA family. In terms of assembly, homotrimer. The subunits circularize to form a toroid; DNA passes through its center. Replication factor C (RFC) is required to load the toroid on the DNA.

Functionally, sliding clamp subunit that acts as a moving platform for DNA processing. Responsible for tethering the catalytic subunit of DNA polymerase and other proteins to DNA during high-speed replication. This is DNA polymerase sliding clamp from Thermococcus fumicolans.